Consider the following 228-residue polypeptide: Thermonuclease (228 aa).

The first 23 residues, 1–23, serve as a signal peptide directing secretion; that stretch reads MTEYLLSAGICMAIVSILLIGMA. A propeptide spanning residues 24-60 is cleaved from the precursor; the sequence is ISNVSKGQYAKRFFYFATSCLVLTLVVVSSLSSSANA. A compositionally biased stretch (polar residues) spans 58-70; it reads ANASQTDNGVNRS. The tract at residues 58-83 is disordered; the sequence is ANASQTDNGVNRSGSEDPTVYSATST. Residue aspartate 100 participates in Ca(2+) binding. Arginine 114 is a catalytic residue. The Ca(2+) site is built by aspartate 119 and threonine 120. Residues glutamate 122 and arginine 166 contribute to the active site.

Belongs to the thermonuclease family. The cofactor is Ca(2+).

It is found in the secreted. It carries out the reaction Endonucleolytic cleavage to nucleoside 3'-phosphates and 3'-phosphooligonucleotide end-products.. Enzyme that catalyzes the hydrolysis of both DNA and RNA at the 5' position of the phosphodiester bond. This is Thermonuclease (nuc) from Staphylococcus aureus (strain COL).